The following is a 409-amino-acid chain: BRCA1-A complex subunit Abraxas 1 (409 aa).

The 154-residue stretch at 7–160 (SAVLSGFVLG…HSLYKPQKGL (154 aa)) folds into the MPN domain. A Phosphoserine modification is found at Ser48. Positions 206-260 (DGSLKEVHKINEMYASLQEELKSICKKVEDSEQAVDKLVKDVNRLKREIEKRRGA) form a coiled coil. The segment covering 362–372 (LLDTQDKRSKA) has biased composition (basic and acidic residues). The tract at residues 362–409 (LLDTQDKRSKADTGSSNQDKASKMSSPETDEEIEKMKGFGEYSRSPTF) is disordered. The span at 373–388 (DTGSSNQDKASKMSSP) shows a compositional bias: polar residues. Phosphoserine is present on residues Ser386 and Ser387. Thr390 bears the Phosphothreonine mark. 2 positions are modified to phosphoserine: Ser404 and Ser406. The pSXXF motif signature appears at 406 to 409 (SPTF).

It belongs to the FAM175 family. Abraxas subfamily. As to quaternary structure, component of the ARISC complex, at least composed of UIMC1/RAP80, ABRAXAS1, BRCC3/BRCC36, BABAM2 and BABAM1/NBA1. Component of the BRCA1-A complex, at least composed of BRCA1, BARD1, UIMC1/RAP80, ABRAXAS1, BRCC3/BRCC36, BABAM2 and BABAM1/NBA1. In the complex, interacts directly with UIMC1/RAP80, BRCC3/BRCC36 and BABAM2. Interacts directly (when phosphorylated at Ser-406) with BRCA1. Homodimer. The homodimer interacts directly (when phosphorylated at Ser-404 and Ser-406) with two BRCA1 chains, giving rise to a heterotetramer. Binds polyubiquitin. In terms of processing, phosphorylation of Ser-406 of the pSXXF motif by ATM or ATR constitutes a specific recognition motif for the BRCT domain of BRCA1. Ionizing radiation promotes rapid phosphorylation at Ser-404 and Ser-406 by ATM; this promotes recruitment of BRCA1 to sites of DNA damage.

The protein resides in the nucleus. In terms of biological role, involved in DNA damage response and double-strand break (DSB) repair. Component of the BRCA1-A complex, acting as a central scaffold protein that assembles the various components of the complex and mediates the recruitment of BRCA1. The BRCA1-A complex specifically recognizes 'Lys-63'-linked ubiquitinated histones H2A and H2AX at DNA lesion sites, leading to target the BRCA1-BARD1 heterodimer to sites of DNA damage at DSBs. This complex also possesses deubiquitinase activity that specifically removes 'Lys-63'-linked ubiquitin on histones H2A and H2AX. The chain is BRCA1-A complex subunit Abraxas 1 from Homo sapiens (Human).